The primary structure comprises 343 residues: SET and MYND domain-containing protein DDB_G0292454 (343 aa).

In terms of domain architecture, SET spans 77–307 (EPFISYPSII…PGDEITISYT (231 aa)). Zn(2+)-binding residues include C93, C96, C111, C114, C120, C124, H133, and C137. The MYND-type zinc-finger motif lies at 93-137 (CNHCLKEIKKEEEEIKQECEECKVYKYCSIECKEKSSIEYHSVLC).

Belongs to the class V-like SAM-binding methyltransferase superfamily.

Probable methyltransferase. The polypeptide is SET and MYND domain-containing protein DDB_G0292454 (Dictyostelium discoideum (Social amoeba)).